Consider the following 373-residue polypeptide: MTEVPWSVVPNGTDAAFLAGLGSLWGNSTVASTAAVSSSFQCALTKTGFQFYYLPAVYILVFIIGFLGNSVAIWMFVFHMKPWSGISVYMFNLALADFLYVLTLPALIFYYFNKTDWIFGDAMCKLQRFIFHVNLYGSILFLTCISAHRYSGVVYPLKSLGRLKKKNAIYVSVLVWLIVVVAISPILFYSGTGTRKNKTVTCYDTTSNDYLRSYFIYSMCTTVAMFCIPLVLILGCYGLIVKALIYNDLDNSPLRRKSIYLVIIVLTVFAVSYIPFHVMKTMNLRARLDFQTPEMCDFNDRVYATYQVTRGLASLNSCVDPILYFLAGDTFRRRLSRATRKASRRSEANLQSKSEEMTLNILSEFKQNGDTSL.

The Extracellular portion of the chain corresponds to 1–51 (MTEVPWSVVPNGTDAAFLAGLGSLWGNSTVASTAAVSSSFQCALTKTGFQF). Residues N11 and N27 are each glycosylated (N-linked (GlcNAc...) asparagine). Cystine bridges form between C42-C296 and C124-C202. K46 contributes to the ADP binding site. Residues 52–74 (YYLPAVYILVFIIGFLGNSVAIW) form a helical membrane-spanning segment. Over 75–87 (MFVFHMKPWSGIS) the chain is Cytoplasmic. Residues 88–109 (VYMFNLALADFLYVLTLPALIF) form a helical membrane-spanning segment. Over 110 to 125 (YYFNKTDWIFGDAMCK) the chain is Extracellular. An N-linked (GlcNAc...) asparagine glycan is attached at N113. The helical transmembrane segment at 126-147 (LQRFIFHVNLYGSILFLTCISA) threads the bilayer. Over 148-166 (HRYSGVVYPLKSLGRLKKK) the chain is Cytoplasmic. Residues 167–188 (NAIYVSVLVWLIVVVAISPILF) traverse the membrane as a helical segment. The Extracellular segment spans residues 189 to 214 (YSGTGTRKNKTVTCYDTTSNDYLRSY). A glycan (N-linked (GlcNAc...) asparagine) is linked at N197. 203–205 (YDT) is an ADP binding site. A helical membrane pass occupies residues 215 to 237 (FIYSMCTTVAMFCIPLVLILGCY). At 238 to 260 (GLIVKALIYNDLDNSPLRRKSIY) the chain is on the cytoplasmic side. Residues 261–284 (LVIIVLTVFAVSYIPFHVMKTMNL) traverse the membrane as a helical segment. Residues 283–287 (NLRAR), 303–306 (YATY), and R310 each bind ADP. Topologically, residues 285–303 (RARLDFQTPEMCDFNDRVY) are extracellular. The helical transmembrane segment at 304–325 (ATYQVTRGLASLNSCVDPILYF) threads the bilayer. Over 326-373 (LAGDTFRRRLSRATRKASRRSEANLQSKSEEMTLNILSEFKQNGDTSL) the chain is Cytoplasmic.

This sequence belongs to the G-protein coupled receptor 1 family.

It localises to the cell membrane. In terms of biological role, receptor for extracellular adenine nucleotides such as ADP. In platelets, binding to ADP leads to mobilization of intracellular calcium ions via activation of phospholipase C, a change in platelet shape, and ultimately platelet aggregation. The polypeptide is P2Y purinoceptor 1 (P2ry1) (Mus musculus (Mouse)).